Consider the following 88-residue polypeptide: Acyl carrier protein (88 aa).

The Carrier domain maps to 4-79 (DSVPAKVMEI…AAVDYIQNKM (76 aa)). S39 is subject to O-(pantetheine 4'-phosphoryl)serine.

The protein belongs to the acyl carrier protein (ACP) family. In terms of processing, 4'-phosphopantetheine is transferred from CoA to a specific serine of apo-ACP by AcpS. This modification is essential for activity because fatty acids are bound in thioester linkage to the sulfhydryl of the prosthetic group.

It localises to the cytoplasm. The protein operates within lipid metabolism; fatty acid biosynthesis. Its function is as follows. Carrier of the growing fatty acid chain in fatty acid biosynthesis. The polypeptide is Acyl carrier protein (Trichodesmium erythraeum (strain IMS101)).